The primary structure comprises 346 residues: 3 beta-hydroxysteroid dehydrogenase/Delta 5--&gt;4-isomerase (346 aa).

Y147 functions as the Proton acceptor in the catalytic mechanism. K151 is a binding site for NAD(+).

It belongs to the 3-beta-HSD family.

The catalysed reaction is a 3beta-hydroxy-Delta(5)-steroid + NAD(+) = a 3-oxo-Delta(5)-steroid + NADH + H(+). It catalyses the reaction a 3-oxo-Delta(5)-steroid = a 3-oxo-Delta(4)-steroid. It participates in lipid metabolism; steroid biosynthesis. In terms of biological role, catalyzes the oxidative conversion of Delta(5)-ene-3-beta-hydroxy steroid, and the oxidative conversion of ketosteroids. The 3-beta-HSD enzymatic system plays a crucial role in the biosynthesis of all classes of hormonal steroids. During viral infection, steroid production contributes to virulence by inhibiting the host inflammatory response. In Monkeypox virus, this protein is 3 beta-hydroxysteroid dehydrogenase/Delta 5--&gt;4-isomerase (OPG174).